A 21-amino-acid polypeptide reads, in one-letter code: Helicopsin (21 aa).

Belongs to the CRISP family. Contains 8 disulfide bonds. In terms of tissue distribution, expressed by the salivary gland.

It is found in the secreted. Helicopsin exhibits robust neurotoxic activity as shown by immediate death (about 8 minutes) of mice due to respiratory paralysis. In Helicops angulatus (South American water snake), this protein is Helicopsin.